Here is a 148-residue protein sequence, read N- to C-terminus: Glutaredoxin-C10 (148 aa).

Residues 16–55 form a disordered region; the sequence is TLDLTVHPPPPPPLPPPAPSTVSSSTASTSLSFDEEETSE. Positions 22–34 are enriched in pro residues; it reads HPPPPPPLPPPAP. A compositionally biased stretch (low complexity) spans 35 to 47; sequence STVSSSTASTSLS. One can recognise a Glutaredoxin domain in the interval 55–147; sequence ESKIGRLISE…PRLVEVGALW (93 aa). Cysteine 76 and cysteine 79 are disulfide-bonded.

This sequence belongs to the glutaredoxin family. CC-type subfamily.

The protein localises to the cytoplasm. Has a glutathione-disulfide oxidoreductase activity in the presence of NADPH and glutathione reductase. Reduces low molecular weight disulfides and proteins. This Arabidopsis thaliana (Mouse-ear cress) protein is Glutaredoxin-C10 (GRXC10).